The chain runs to 363 residues: Peptide chain release factor 1 (363 aa).

Glutamine 237 bears the N5-methylglutamine mark. The span at 284 to 296 (EDEKRRSAEESTR) shows a compositional bias: basic and acidic residues. The tract at residues 284–305 (EDEKRRSAEESTRRSLVASGDR) is disordered.

The protein belongs to the prokaryotic/mitochondrial release factor family. In terms of processing, methylated by PrmC. Methylation increases the termination efficiency of RF1.

Its subcellular location is the cytoplasm. In terms of biological role, peptide chain release factor 1 directs the termination of translation in response to the peptide chain termination codons UAG and UAA. This Shewanella sp. (strain MR-4) protein is Peptide chain release factor 1.